A 334-amino-acid chain; its full sequence is Tryptophan--tRNA ligase (334 aa).

ATP contacts are provided by residues 11 to 13 (QPS) and 19 to 20 (GN). Positions 12 to 20 (PSGELTIGN) match the 'HIGH' region motif. Position 135 (Asp-135) interacts with L-tryptophan. ATP contacts are provided by residues 147 to 149 (GED), Val-186, and 195 to 199 (KMSKS). The short motif at 195–199 (KMSKS) is the 'KMSKS' region element.

It belongs to the class-I aminoacyl-tRNA synthetase family. In terms of assembly, homodimer.

The protein localises to the cytoplasm. The enzyme catalyses tRNA(Trp) + L-tryptophan + ATP = L-tryptophyl-tRNA(Trp) + AMP + diphosphate + H(+). Its function is as follows. Catalyzes the attachment of tryptophan to tRNA(Trp). The polypeptide is Tryptophan--tRNA ligase (Klebsiella aerogenes (Enterobacter aerogenes)).